Consider the following 291-residue polypeptide: Formamidopyrimidine-DNA glycosylase (291 aa).

The active-site Schiff-base intermediate with DNA is the proline 2. Residue glutamate 3 is the Proton donor of the active site. The active-site Proton donor; for beta-elimination activity is the lysine 58. Residues histidine 100, arginine 123, and lysine 166 each contribute to the DNA site. The segment at 257 to 291 (SVYGREGKECLHCGIPIVRILQSGRSSFYCSQCQK) adopts an FPG-type zinc-finger fold. Arginine 281 serves as the catalytic Proton donor; for delta-elimination activity.

Belongs to the FPG family. In terms of assembly, monomer. Zn(2+) serves as cofactor.

The enzyme catalyses Hydrolysis of DNA containing ring-opened 7-methylguanine residues, releasing 2,6-diamino-4-hydroxy-5-(N-methyl)formamidopyrimidine.. The catalysed reaction is 2'-deoxyribonucleotide-(2'-deoxyribose 5'-phosphate)-2'-deoxyribonucleotide-DNA = a 3'-end 2'-deoxyribonucleotide-(2,3-dehydro-2,3-deoxyribose 5'-phosphate)-DNA + a 5'-end 5'-phospho-2'-deoxyribonucleoside-DNA + H(+). Functionally, involved in base excision repair of DNA damaged by oxidation or by mutagenic agents. Acts as a DNA glycosylase that recognizes and removes damaged bases. Has a preference for oxidized purines, such as 7,8-dihydro-8-oxoguanine (8-oxoG). Has AP (apurinic/apyrimidinic) lyase activity and introduces nicks in the DNA strand. Cleaves the DNA backbone by beta-delta elimination to generate a single-strand break at the site of the removed base with both 3'- and 5'-phosphates. This is Formamidopyrimidine-DNA glycosylase from Bartonella henselae (strain ATCC 49882 / DSM 28221 / CCUG 30454 / Houston 1) (Rochalimaea henselae).